The sequence spans 298 residues: MVDEILKLKKEKGYIILAHNYQIPELQDIADFVGDSLQLARKAMELSEKKILFLGVDFMAELVKILNPDKKVIVPDKSATCPMANRLTPEIIREYREKFPGAPVVLYVNSTSECKTLADVICTSANAVEVVKRLDSSVVIFGPDRNLGEYVAEKTGKKVITIPENGHCPVHQFNAESIDAVRKKYPDAKVIVHPESPKPVRDKADYVGSTGQMEKIPEKDPSRIFVIGTEIGMIHKLKKKFPDREFVPLEMAVCVNMKKNTLENTLHALQTESFEVILPKEVIEKAKKPILRMFELMG.

Residues histidine 19 and serine 36 each coordinate iminosuccinate. Position 81 (cysteine 81) interacts with [4Fe-4S] cluster. Iminosuccinate-binding positions include 107-109 (YVN) and serine 124. Cysteine 168 lines the [4Fe-4S] cluster pocket. Residues 193–195 (HPE) and threonine 210 each bind iminosuccinate. Cysteine 254 is a [4Fe-4S] cluster binding site.

Belongs to the quinolinate synthase family. Type 2 subfamily. It depends on [4Fe-4S] cluster as a cofactor.

The protein localises to the cytoplasm. It catalyses the reaction iminosuccinate + dihydroxyacetone phosphate = quinolinate + phosphate + 2 H2O + H(+). It participates in cofactor biosynthesis; NAD(+) biosynthesis; quinolinate from iminoaspartate: step 1/1. Its function is as follows. Catalyzes the condensation of iminoaspartate with dihydroxyacetone phosphate to form quinolinate. This is Quinolinate synthase from Thermotoga petrophila (strain ATCC BAA-488 / DSM 13995 / JCM 10881 / RKU-1).